We begin with the raw amino-acid sequence, 341 residues long: 4-hydroxy-2-oxovalerate aldolase (341 aa).

The 251-residue stretch at 9–259 (VRITEVCLRD…KLDIDLYKMM (251 aa)) folds into the Pyruvate carboxyltransferase domain. 17-18 (RD) contacts substrate. A Mn(2+)-binding site is contributed by Asp-18. The active-site Proton acceptor is the His-21. The substrate site is built by Ser-171 and His-198. Residues His-198 and His-200 each coordinate Mn(2+). Tyr-289 serves as a coordination point for substrate.

Belongs to the 4-hydroxy-2-oxovalerate aldolase family.

The catalysed reaction is (S)-4-hydroxy-2-oxopentanoate = acetaldehyde + pyruvate. This Bacillus thuringiensis (strain Al Hakam) protein is 4-hydroxy-2-oxovalerate aldolase.